The following is a 198-amino-acid chain: Dermorphin-2 (198 aa).

Residues Met-1–Ser-20 form the signal peptide. A propeptide spanning residues Val-21–Met-45 is cleaved from the precursor. Residues Glu-24–Lys-198 form a disordered region. Ala-49 is modified (D-alanine (Ala)). Position 54 is a serine amide (Ser-54). Positions Glu-56 to Glu-65 are enriched in basic and acidic residues. Residues Glu-56–Met-80 constitute a propeptide that is removed on maturation. Ala-84 is subject to D-alanine (Ala). Ser-89 is modified (serine amide). Residues Glu-91–Met-115 constitute a propeptide that is removed on maturation. Positions Glu-100–His-109 are enriched in acidic residues. Ala-119 carries the D-alanine (Ala) modification. Serine amide is present on Ser-124. The span at Glu-126 to Glu-135 shows a compositional bias: basic and acidic residues. The propeptide occupies Glu-126–Met-150. D-alanine (Ala) is present on Ala-154. At Ser-159 the chain carries Serine amide. The propeptide occupies Glu-161–Met-185. Residues Glu-170–His-179 show a composition bias toward acidic residues. D-alanine (Ala) is present on Ala-189. Serine amide is present on Ser-194. Residues Glu-196–Lys-198 constitute a propeptide that is removed on maturation.

Belongs to the frog skin active peptide (FSAP) family. Dermorphin subfamily. Expressed by the skin glands.

It localises to the secreted. Dermorphin has a very potent opiate-like activity. It has high affinity and selectivity for mu-type opioid receptors. The chain is Dermorphin-2 from Phyllomedusa sauvagei (Sauvage's leaf frog).